The sequence spans 414 residues: Protein HIM1 (414 aa).

May participate in the control of processing of mutational intermediates appearing during error-prone bypass of DNA damage. The protein is Protein HIM1 (HIM1) of Saccharomyces cerevisiae (strain ATCC 204508 / S288c) (Baker's yeast).